Consider the following 273-residue polypeptide: Hydroxyethylthiazole kinase (273 aa).

Position 47 (Met-47) interacts with substrate. 2 residues coordinate ATP: Arg-123 and Thr-169. Gly-196 provides a ligand contact to substrate.

The protein belongs to the Thz kinase family. The cofactor is Mg(2+).

The enzyme catalyses 5-(2-hydroxyethyl)-4-methylthiazole + ATP = 4-methyl-5-(2-phosphooxyethyl)-thiazole + ADP + H(+). The protein operates within cofactor biosynthesis; thiamine diphosphate biosynthesis; 4-methyl-5-(2-phosphoethyl)-thiazole from 5-(2-hydroxyethyl)-4-methylthiazole: step 1/1. Its function is as follows. Catalyzes the phosphorylation of the hydroxyl group of 4-methyl-5-beta-hydroxyethylthiazole (THZ). The sequence is that of Hydroxyethylthiazole kinase from Desulfotalea psychrophila (strain LSv54 / DSM 12343).